The following is a 102-amino-acid chain: ATP-dependent Clp protease adapter protein ClpS (102 aa).

Belongs to the ClpS family. Binds to the N-terminal domain of the chaperone ClpA.

Its function is as follows. Involved in the modulation of the specificity of the ClpAP-mediated ATP-dependent protein degradation. In Dechloromonas aromatica (strain RCB), this protein is ATP-dependent Clp protease adapter protein ClpS.